A 256-amino-acid polypeptide reads, in one-letter code: Pimeloyl-[acyl-carrier protein] methyl ester esterase (256 aa).

Residues 15-242 (HLVLLHGWGL…AAHAPFISHP (228 aa)) enclose the AB hydrolase-1 domain. Residues W22, 82-83 (SL), and 143-147 (FLALQ) contribute to the substrate site. Residue S82 is the Nucleophile of the active site. Residues D207 and H235 contribute to the active site. A substrate-binding site is contributed by H235.

Belongs to the AB hydrolase superfamily. Carboxylesterase BioH family. Monomer.

The protein localises to the cytoplasm. The enzyme catalyses 6-carboxyhexanoyl-[ACP] methyl ester + H2O = 6-carboxyhexanoyl-[ACP] + methanol + H(+). Its pathway is cofactor biosynthesis; biotin biosynthesis. Functionally, the physiological role of BioH is to remove the methyl group introduced by BioC when the pimeloyl moiety is complete. It allows to synthesize pimeloyl-ACP via the fatty acid synthetic pathway through the hydrolysis of the ester bonds of pimeloyl-ACP esters. The protein is Pimeloyl-[acyl-carrier protein] methyl ester esterase of Escherichia coli (strain SMS-3-5 / SECEC).